The following is a 623-amino-acid chain: DELLA protein RHT-1 (623 aa).

Residues Met-1 to Val-27 form a disordered region. Positions Gly-9–Gly-19 are enriched in gly residues. The DELLA motif motif lies at Asp-38 to Ala-42. Disordered regions lie at residues Leu-109–Asp-138 and Ala-159–Ser-201. The segment covering Ala-111–Pro-120 has biased composition (pro residues). Low complexity-rich tracts occupy residues Gln-121 to Thr-131 and Gly-181 to Ser-201. Residues Val-225–Arg-619 form the GRAS domain. The segment at Ile-232–Arg-288 is leucine repeat I (LRI). Residues Leu-239 to Glu-243 carry the LxCxE motif motif. The segment at His-307–Gly-372 is VHIID. A VHIID motif is present at residues Val-338–Asp-342. The leucine repeat II (LRII) stretch occupies residues Gln-386–Glu-425. A PFYRE region spans residues Ile-435–Asn-540. An SAW region spans residues Ala-543 to Arg-619.

It belongs to the GRAS family. DELLA subfamily. In terms of processing, phosphorylated. Post-translationally, ubiquitinated. Upon GA application it is ubiquitinated, leading to its subsequent degradation.

Its subcellular location is the nucleus. Functionally, probable transcriptional regulator that acts as a repressor of the gibberellin (GA) signaling pathway. Probably acts by participating in large multiprotein complexes that repress transcription of GA-inducible genes. Upon GA application, it is degraded by the proteasome, allowing the GA signaling pathway. This is DELLA protein RHT-1 (RHT1) from Triticum aestivum (Wheat).